The following is a 116-amino-acid chain: Iron-sulfur cluster insertion protein ErpA (116 aa).

Iron-sulfur cluster-binding residues include Cys44, Cys108, and Cys110.

The protein belongs to the HesB/IscA family. In terms of assembly, homodimer. It depends on iron-sulfur cluster as a cofactor.

Functionally, required for insertion of 4Fe-4S clusters for at least IspG. In Pseudomonas putida (strain ATCC 47054 / DSM 6125 / CFBP 8728 / NCIMB 11950 / KT2440), this protein is Iron-sulfur cluster insertion protein ErpA.